Reading from the N-terminus, the 196-residue chain is MSYYAFEGLIPVVHPTAFVHPSAVLIGYVIVGAGVYIGPLASLRGDYGRLIVQAGANIQDGCIMHGYCDTDTIVGENGHIGHGAILHGCVIGRDALVGMNSVIMDGAVIGEESIVAAMSFVKAGFHGEKRQLLMGTPARAVRSVSDDELHWKRLNTKEYQDLVGRCHASLHETQPLRQMEENRPRLQGTTDVTPKR.

The disordered stretch occupies residues 173 to 196 (TQPLRQMEENRPRLQGTTDVTPKR). Over residues 187–196 (QGTTDVTPKR) the composition is skewed to polar residues.

This sequence belongs to the transferase hexapeptide repeat family.

Its pathway is amine and polyamine metabolism; carnitine metabolism. Functionally, overproduction of CaiE stimulates the activity of CaiB and CaiD. The sequence is that of Carnitine operon protein CaiE from Shigella dysenteriae serotype 1 (strain Sd197).